The primary structure comprises 299 residues: tRNA uridine(34) hydroxylase (299 aa).

Residues Ala132 to Tyr226 form the Rhodanese domain. Residue Cys186 is the Cysteine persulfide intermediate of the active site.

The protein belongs to the TrhO family.

It carries out the reaction uridine(34) in tRNA + AH2 + O2 = 5-hydroxyuridine(34) in tRNA + A + H2O. Its function is as follows. Catalyzes oxygen-dependent 5-hydroxyuridine (ho5U) modification at position 34 in tRNAs. The sequence is that of tRNA uridine(34) hydroxylase from Burkholderia pseudomallei (strain 1106a).